The sequence spans 165 residues: Ubiquitin-fold modifier-conjugating enzyme 1 (165 aa).

Catalysis depends on Cys-116, which acts as the Glycyl thioester intermediate.

It belongs to the ubiquitin-conjugating enzyme family. UFC1 subfamily.

In terms of biological role, E2-like enzyme which forms an intermediate with UFM1 via a thioester linkage. The chain is Ubiquitin-fold modifier-conjugating enzyme 1 from Drosophila virilis (Fruit fly).